The primary structure comprises 89 residues: ATP synthase subunit H, mitochondrial (89 aa).

As to quaternary structure, F-type ATP synthases have 2 components, the catalytic core F(1) and the membrane-embedded component F(0), linked together by a central stalk and a peripheral stalk. The central stalk, also called rotor shaft, is often seen as part of F(1). The peripheral stalk is seen as part of F(0). F(0) contains the membrane channel next to the rotor. F-type ATP synthases form dimers but each monomer functions independently in ATP generation. The dimer consists of 18 different polypeptides: ATP1 (subunit alpha, part of F(1), 3 molecules per monomer), ATP2 (subunit beta, part of F(1), 3 molecules per monomer), ATP3 (subunit gamma, part of the central stalk), ATP4 (subunit b, part of the peripheral stalk), ATP5/OSCP (subunit 5/OSCP, part of the peripheral stalk), ATP6 (subunit a, part of the peripheral stalk), ATP7 (subunit d, part of the peripheral stalk), ATP8 (subunit 8, part of the peripheral stalk), OLI1 (subunit c, part of the rotor, 10 molecules per monomer), ATP14 (subunit H, part of the peripheral stalk), ATP15 (subunit epsilon, part of the central stalk), ATP16 (subunit delta, part of the central stalk), ATP17 (subunit f, part of the peripheral stalk), ATP18 (subunit i/j, part of the peripheral stalk). Dimer-specific subunits are ATP19 (subunit k, at interface between monomers), ATP20 (subunit g, at interface between monomers), TIM11 (subunit e, at interface between monomers). Also contains subunit L.

The protein localises to the mitochondrion inner membrane. Mitochondrial membrane ATP synthase (F(1)F(0) ATP synthase or Complex V) produces ATP from ADP in the presence of a proton gradient across the membrane which is generated by electron transport complexes of the respiratory chain. F-type ATP synthases consist of two structural domains, F(1) - containing the extramembraneous catalytic core, and F(0) - containing the membrane proton channel, linked together by a central stalk and a peripheral stalk. During catalysis, ATP synthesis in the catalytic domain of F(1) is coupled via a rotary mechanism of the central stalk subunits to proton translocation. Part of the peripheral stalk. The chain is ATP synthase subunit H, mitochondrial from Pichia angusta (Yeast).